A 200-amino-acid chain; its full sequence is FMN-dependent NADH:quinone oxidoreductase (200 aa).

Residues Ser10 and 95-98 (MYNF) each bind FMN.

It belongs to the azoreductase type 1 family. Homodimer. FMN serves as cofactor.

It catalyses the reaction 2 a quinone + NADH + H(+) = 2 a 1,4-benzosemiquinone + NAD(+). It carries out the reaction N,N-dimethyl-1,4-phenylenediamine + anthranilate + 2 NAD(+) = 2-(4-dimethylaminophenyl)diazenylbenzoate + 2 NADH + 2 H(+). Functionally, quinone reductase that provides resistance to thiol-specific stress caused by electrophilic quinones. In terms of biological role, also exhibits azoreductase activity. Catalyzes the reductive cleavage of the azo bond in aromatic azo compounds to the corresponding amines. The chain is FMN-dependent NADH:quinone oxidoreductase from Alteromonas mediterranea (strain DSM 17117 / CIP 110805 / LMG 28347 / Deep ecotype).